The primary structure comprises 323 residues: PI-PLC X domain-containing protein 1 (323 aa).

The PI-PLC X-box domain maps to 30-206 (RLWDVPLHHL…QVIVSYEDES (177 aa)).

Widely expressed.

Its subcellular location is the cytoplasm. The protein is PI-PLC X domain-containing protein 1 (PLCXD1) of Homo sapiens (Human).